We begin with the raw amino-acid sequence, 368 residues long: uncharacterized protein (368 aa).

The protein belongs to the YCR102c/YLR460c/YNL134c family.

This is an uncharacterized protein from Saccharomyces cerevisiae (strain ATCC 204508 / S288c) (Baker's yeast).